A 57-amino-acid chain; its full sequence is uncharacterized protein (57 aa).

Residues M1–N57 form a disordered region. 2 stretches are compositionally biased toward basic and acidic residues: residues A12–K23 and D36–K45. The span at K46–N57 shows a compositional bias: basic residues.

It belongs to the con-10 family.

This is an uncharacterized protein from Escherichia coli (strain K12).